Reading from the N-terminus, the 337-residue chain is Ketol-acid reductoisomerase (NADP(+)) (337 aa).

Positions 1 to 183 constitute a KARI N-terminal Rossmann domain; that stretch reads MAIETLYDSD…GGARAGVIPT (183 aa). NADP(+) contacts are provided by residues 26 to 29, R49, S52, S54, and 84 to 87; these read YGSQ and DTSQ. The active site involves H109. NADP(+) is bound at residue G135. One can recognise a KARI C-terminal knotted domain in the interval 184 to 329; the sequence is TFKDETETDL…SQLRDLMSWV (146 aa). Mg(2+) is bound by residues D192, E196, E228, and E232. S253 contacts substrate.

It belongs to the ketol-acid reductoisomerase family. Mg(2+) serves as cofactor.

It catalyses the reaction (2R)-2,3-dihydroxy-3-methylbutanoate + NADP(+) = (2S)-2-acetolactate + NADPH + H(+). The catalysed reaction is (2R,3R)-2,3-dihydroxy-3-methylpentanoate + NADP(+) = (S)-2-ethyl-2-hydroxy-3-oxobutanoate + NADPH + H(+). It participates in amino-acid biosynthesis; L-isoleucine biosynthesis; L-isoleucine from 2-oxobutanoate: step 2/4. Its pathway is amino-acid biosynthesis; L-valine biosynthesis; L-valine from pyruvate: step 2/4. Involved in the biosynthesis of branched-chain amino acids (BCAA). Catalyzes an alkyl-migration followed by a ketol-acid reduction of (S)-2-acetolactate (S2AL) to yield (R)-2,3-dihydroxy-isovalerate. In the isomerase reaction, S2AL is rearranged via a Mg-dependent methyl migration to produce 3-hydroxy-3-methyl-2-ketobutyrate (HMKB). In the reductase reaction, this 2-ketoacid undergoes a metal-dependent reduction by NADPH to yield (R)-2,3-dihydroxy-isovalerate. The chain is Ketol-acid reductoisomerase (NADP(+)) from Corynebacterium aurimucosum (strain ATCC 700975 / DSM 44827 / CIP 107346 / CN-1) (Corynebacterium nigricans).